Here is a 448-residue protein sequence, read N- to C-terminus: Probable glycine dehydrogenase (decarboxylating) subunit 1 (448 aa).

Belongs to the GcvP family. N-terminal subunit subfamily. As to quaternary structure, the glycine cleavage system is composed of four proteins: P, T, L and H. In this organism, the P 'protein' is a heterodimer of two subunits.

It carries out the reaction N(6)-[(R)-lipoyl]-L-lysyl-[glycine-cleavage complex H protein] + glycine + H(+) = N(6)-[(R)-S(8)-aminomethyldihydrolipoyl]-L-lysyl-[glycine-cleavage complex H protein] + CO2. In terms of biological role, the glycine cleavage system catalyzes the degradation of glycine. The P protein binds the alpha-amino group of glycine through its pyridoxal phosphate cofactor; CO(2) is released and the remaining methylamine moiety is then transferred to the lipoamide cofactor of the H protein. This chain is Probable glycine dehydrogenase (decarboxylating) subunit 1, found in Staphylococcus epidermidis (strain ATCC 35984 / DSM 28319 / BCRC 17069 / CCUG 31568 / BM 3577 / RP62A).